A 56-amino-acid chain; its full sequence is Calsequestrin-1 (56 aa).

Tyrosine 9 is subject to Phosphotyrosine. At serine 47 the chain carries Phosphoserine.

This sequence belongs to the calsequestrin family. Monomer; increases in response to a depletion of intracellular calcium. Homodimer. Homotetramer and homopolymer. Can form linear homooligomers. Ca(2+) ions promote oligomerization. Interacts (via C-terminal end and preferentially with the monomeric form) with STIM1; this interaction increases in response to a depletion of intracellular calcium, decreases both STIM1 aggregation and clustering, interaction of STIM1 with ORAI1 and store-operated Ca(2+) entry (SOCE) activity. Interacts with ASPH and TRDN. Post-translationally, N-glycosylated.

It localises to the endoplasmic reticulum. It is found in the sarcoplasmic reticulum. The protein resides in the sarcoplasmic reticulum lumen. The protein localises to the sarcoplasmic reticulum membrane. Its subcellular location is the mitochondrion matrix. Its function is as follows. Calsequestrin is a high-capacity, moderate affinity, calcium-binding protein and thus acts as an internal calcium store in muscle. Calcium ions are bound by clusters of acidic residues at the protein surface, often at the interface between subunits. Can bind around 80 Ca(2+) ions. Regulates the release of lumenal Ca(2+) via the calcium release channel RYR1; this plays an important role in triggering muscle contraction. Negatively regulates store-operated Ca(2+) entry (SOCE) activity. In Canis lupus familiaris (Dog), this protein is Calsequestrin-1 (CASQ1).